Here is a 37-residue protein sequence, read N- to C-terminus: Cytochrome b6-f complex subunit 5 (37 aa).

A helical transmembrane segment spans residues 5 to 25 (LLSGIVLGLVPVTIAGLFVTA).

This sequence belongs to the PetG family. As to quaternary structure, the 4 large subunits of the cytochrome b6-f complex are cytochrome b6, subunit IV (17 kDa polypeptide, PetD), cytochrome f and the Rieske protein, while the 4 small subunits are PetG, PetL, PetM and PetN. The complex functions as a dimer.

It localises to the plastid. The protein localises to the chloroplast thylakoid membrane. In terms of biological role, component of the cytochrome b6-f complex, which mediates electron transfer between photosystem II (PSII) and photosystem I (PSI), cyclic electron flow around PSI, and state transitions. PetG is required for either the stability or assembly of the cytochrome b6-f complex. This Chlamydomonas moewusii (Chlamydomonas eugametos) protein is Cytochrome b6-f complex subunit 5.